A 632-amino-acid polypeptide reads, in one-letter code: tRNA uridine 5-carboxymethylaminomethyl modification enzyme MnmG (632 aa).

13–18 is an FAD binding site; the sequence is GGGHAG. NAD(+) is bound at residue 273–287; the sequence is GPRYCPSIEDKIHRF.

It belongs to the MnmG family. Homodimer. Heterotetramer of two MnmE and two MnmG subunits. FAD serves as cofactor.

It localises to the cytoplasm. NAD-binding protein involved in the addition of a carboxymethylaminomethyl (cmnm) group at the wobble position (U34) of certain tRNAs, forming tRNA-cmnm(5)s(2)U34. The protein is tRNA uridine 5-carboxymethylaminomethyl modification enzyme MnmG of Psychrobacter cryohalolentis (strain ATCC BAA-1226 / DSM 17306 / VKM B-2378 / K5).